We begin with the raw amino-acid sequence, 517 residues long: Maturase K (517 aa).

It belongs to the intron maturase 2 family. MatK subfamily.

The protein localises to the plastid. It is found in the chloroplast. In terms of biological role, usually encoded in the trnK tRNA gene intron. Probably assists in splicing its own and other chloroplast group II introns. In Caryota mitis (Burmese fishtail palm), this protein is Maturase K.